A 202-amino-acid chain; its full sequence is Tumor necrosis factor alpha-induced protein 8-like protein 3 (202 aa).

Residues 1-10 are compositionally biased toward acidic residues; that stretch reads MDTDSGDLSE. A disordered region spans residues 1 to 24; it reads MDTDSGDLSEGELSPGPEQFSSKS.

This sequence belongs to the TNFAIP8 family.

Its subcellular location is the cytoplasm. It localises to the cell membrane. Functionally, may act as a lipid transfer protein. This is Tumor necrosis factor alpha-induced protein 8-like protein 3 (tnfaip8l3) from Xenopus laevis (African clawed frog).